Consider the following 557-residue polypeptide: DNA ligase (557 aa).

Glutamate 249 is an ATP binding site. Residue lysine 251 is the N6-AMP-lysine intermediate of the active site. Arginine 256, arginine 271, glutamate 301, phenylalanine 340, arginine 417, and lysine 423 together coordinate ATP.

Belongs to the ATP-dependent DNA ligase family. Requires Mg(2+) as cofactor.

The catalysed reaction is ATP + (deoxyribonucleotide)n-3'-hydroxyl + 5'-phospho-(deoxyribonucleotide)m = (deoxyribonucleotide)n+m + AMP + diphosphate.. Functionally, DNA ligase that seals nicks in double-stranded DNA during DNA replication, DNA recombination and DNA repair. In Methanothermobacter thermautotrophicus (Methanobacterium thermoformicicum), this protein is DNA ligase.